The sequence spans 2531 residues: Serine/threonine-protein kinase ATR (2531 aa).

In terms of domain architecture, FAT spans 1490-2067 (LIVKVAETFG…MWQSAYLLRQ (578 aa)). The PI3K/PI4K catalytic domain maps to 2192–2512 (FSDKVKVLHS…VSQLASSLIE (321 aa)). Residues 2198–2204 (VLHSNTK) are G-loop. Residues 2368 to 2376 (GLGDRHTKN) are catalytic loop. The activation loop stretch occupies residues 2387-2411 (HVDFDMIFNKGETLGTPELVPFRLT). Positions 2499–2531 (HPMQVSQLASSLIELATSEEKLSEMYLGWMATL) constitute an FATC domain.

Belongs to the PI3/PI4-kinase family. ATM subfamily. Mn(2+) is required as a cofactor.

The protein resides in the nucleus. It carries out the reaction L-seryl-[protein] + ATP = O-phospho-L-seryl-[protein] + ADP + H(+). The catalysed reaction is L-threonyl-[protein] + ATP = O-phospho-L-threonyl-[protein] + ADP + H(+). Serine/threonine protein kinase which activates checkpoint signaling upon genotoxic stresses such as ionizing radiation (IR), ultraviolet light (UV), or DNA replication stalling, thereby acting as a DNA damage sensor. Recognizes the substrate consensus sequence [ST]-Q. Phosphorylates various proteins, which collectively inhibits DNA replication and mitosis and promotes DNA repair and recombination. Prevents mitotic catastrophe by functioning in the S-phase checkpoint and cooperating with atm-1 in the checkpoint response to double-strand breaks (DSBs) after ionizing radiation (IR) to induce cell cycle arrest or apoptosis via the cep-1/p53 pathway. In response to ionizing radiation, probably required for the association between the brc-1-brd-1 heterodimer and rad-51 and let-70 in order to activate E3-ubiquitin ligase activity of the heterodimer and induce ubiquitination at DNA damage sites. This chain is Serine/threonine-protein kinase ATR, found in Caenorhabditis elegans.